Reading from the N-terminus, the 451-residue chain is Phosphoglucosamine mutase (451 aa).

Ser-102 (phosphoserine intermediate) is an active-site residue. Mg(2+) is bound by residues Ser-102, Asp-243, Asp-245, and Asp-247. Position 102 is a phosphoserine (Ser-102).

This sequence belongs to the phosphohexose mutase family. Requires Mg(2+) as cofactor. Post-translationally, activated by phosphorylation.

It carries out the reaction alpha-D-glucosamine 1-phosphate = D-glucosamine 6-phosphate. Its function is as follows. Catalyzes the conversion of glucosamine-6-phosphate to glucosamine-1-phosphate. This chain is Phosphoglucosamine mutase, found in Brucella abortus (strain 2308).